The chain runs to 92 residues: UPF0473 protein Cbei_1107 (92 aa).

Belongs to the UPF0473 family.

This chain is UPF0473 protein Cbei_1107, found in Clostridium beijerinckii (strain ATCC 51743 / NCIMB 8052) (Clostridium acetobutylicum).